The sequence spans 385 residues: MTWQQRIERALDERQQTDAFRRRLPVSHGAGRWLEREGERWLNFSSNDYLGLSQHAGIIAAWQQGAERYGVGSGGSGHVSGYSEAHRALEEELADWLGYPRALLFISGFAANQALVAALAEKEDRIVADRLSHASLLEAASLSPAQLRRFAHNDPQQLAQLLAKPLDGLQLVVTEGIFSMDGDSAPLADIQAAARSAGALLLVDDAHGIGAIGDEGRGSCHTQAVRPELLVVTFGKAFGVSGAAVLCSESMADYLLQFARHLIYSTAMPPAQAVALSAALRVIRSDEGQQRRETLAARIRQFRAGMGDVSLGLTDSVSAIQPLIVGDNARALSLACRLREAGCWATAIRPPTVPVGSARLRLTLTAAHQAEDINRLLEALHGHGE.

Residue arginine 21 participates in substrate binding. Residue 108–109 (GF) coordinates pyridoxal 5'-phosphate. Histidine 133 is a substrate binding site. Pyridoxal 5'-phosphate is bound by residues serine 179, histidine 207, and threonine 233. Lysine 236 carries the N6-(pyridoxal phosphate)lysine modification. Threonine 352 lines the substrate pocket.

The protein belongs to the class-II pyridoxal-phosphate-dependent aminotransferase family. BioF subfamily. As to quaternary structure, homodimer. The cofactor is pyridoxal 5'-phosphate.

The enzyme catalyses 6-carboxyhexanoyl-[ACP] + L-alanine + H(+) = (8S)-8-amino-7-oxononanoate + holo-[ACP] + CO2. Its pathway is cofactor biosynthesis; biotin biosynthesis. Catalyzes the decarboxylative condensation of pimeloyl-[acyl-carrier protein] and L-alanine to produce 8-amino-7-oxononanoate (AON), [acyl-carrier protein], and carbon dioxide. In Klebsiella pneumoniae (strain 342), this protein is 8-amino-7-oxononanoate synthase.